The primary structure comprises 2286 residues: Non-reducing polyketide synthase fsr1 (2286 aa).

An N-terminal acylcarrier protein transacylase domain (SAT) region spans residues 7-342 (LYLFGDQTFD…IYTALKKTSL (336 aa)). The 438-residue stretch at 368-805 (KPKLAIVAMS…GGNSALLIQD (438 aa)) folds into the Ketosynthase family 3 (KS3) domain. Residues Cys540, His675, and His722 each act as for beta-ketoacyl synthase activity in the active site. The acyl/malonyl transferases stretch occupies residues 905 to 1195 (VFTFTGQGAQ…GMVKPTLGQQ (291 aa)). Catalysis depends on Ser996, which acts as the For acyl/malonyl transferase activity. The segment at 1285-1417 (HSVVEESGDS…CVVLFKDRSH (133 aa)) is N-terminal hotdog fold. Positions 1285 to 1591 (HSVVEESGDS…IQGVPRRVLK (307 aa)) constitute a PKS/mFAS DH domain. Positions 1296 to 1588 (KTGIVVEADI…QIAIQGVPRR (293 aa)) are product template (PT) domainn. Residue His1317 is the Proton acceptor; for dehydratase activity of the active site. The segment at 1444-1591 (SARFNRPMAY…IQGVPRRVLK (148 aa)) is C-terminal hotdog fold. The Proton donor; for dehydratase activity role is filled by Asp1504. The disordered stretch occupies residues 1600-1639 (KKGQPQRQTQDKPRNTPSQTKDSTPKPAQNKPAAKVEPPK). The 76-residue stretch at 1637 to 1712 (PPKFSTAIRI…DLRAFLGADE (76 aa)) folds into the Carrier 1 domain. Ser1671 carries the O-(pantetheine 4'-phosphoryl)serine modification. The tract at residues 1716 to 1735 (ESSSSAASDSGRDTTTTGSA) is disordered. A Carrier 2 domain is found at 1748 to 1823 (EVEFERALEI…DLKTMLAREM (76 aa)). Ser1782 is modified (O-(pantetheine 4'-phosphoryl)serine). The segment at 1897–2145 (VTGASGGLGS…NWTPVNDIAD (249 aa)) is reductase (R) domain.

Its pathway is polyketide biosynthesis. Its function is as follows. Non-reducing polyketide synthase; part of the gene cluster that mediates the biosynthesis of fusarubins, highly pigmented naphthoquinones responsible for the coloration of the fruiting bodies. The non-reducing polyketide synthase FSR1 is responsible for the condensation of seven acetyl-CoA units to yield a haptaketide. After rings A and B are formed by aldol-type cyclization, the PKS-derived product is released as 6-O-demethylfusarubinaldehyde. Then, two hydroxyl groups at C-5 and C-10 are incorporated by FSR3, and simultaneously hydroxyl groups at C-6 and C-8 are methylated by FSR2. The aldehyde is, on the one hand, reduced by FSR3 to 8-O-methylfusarubin alcohol, which equilibrates mainly with 8-O-methylfusarubin and only small amounts of 8-O-methylnectriafurone. On the other hand, the aldehyde can be oxidized to form 8-O-methylfusarubinic acid, a reaction driven by FSR3 equilibrating with 8-O-methylfusarubinlactone, finally resulting in 8-O-methylanhydrofusarubinlactol after a further reduction step and loss of water. 8-O-Methylfusarubinic acid can also undergo decarboxylation, resulting in 8-O-methyl-13-hydroxynorjavanicin after another hydroxylation step at C-13. Both steps are most likely also accomplished by FSR3. No enzymatic function has been determined so far for either FSR4 and FSR5. Their deletion does not alter the product spectrum, but the possibility that they catalyze specific enzymatic steps during perithecium development cannot be ruled out. FSR4 might possess a regulatory function in the biosynthesis of fusarubins. This chain is Non-reducing polyketide synthase fsr1, found in Gibberella fujikuroi (strain CBS 195.34 / IMI 58289 / NRRL A-6831) (Bakanae and foot rot disease fungus).